Consider the following 70-residue polypeptide: Protein SlyX homolog (70 aa).

The protein belongs to the SlyX family.

In Shewanella denitrificans (strain OS217 / ATCC BAA-1090 / DSM 15013), this protein is Protein SlyX homolog.